Here is an 823-residue protein sequence, read N- to C-terminus: Putative ankyrin repeat domain-containing protein 20A3 (823 aa).

ANK repeat units lie at residues 66–95, 99–128, 132–161, 165–194, and 198–227; these read QHRTALHLACASGHVQVVTLLVNRKCQIDV, ENRTPLIQAVHCQEEACAVILLEHGANPNL, YGNTALHYAVYSESTSLAEKLLSHGAHIEA, DNNTPLLFAIICKKEKMVEFLLKRKASSHA, and LRRSALMLAVYYDSPGIVNILLKQNIDVFA. Disordered regions lie at residues 301-343 and 355-402; these read VPEK…EVED and VQTL…LSEN. A compositionally biased stretch (basic and acidic residues) spans 372–384; the sequence is QERHERSEKKQPQ. 3 coiled-coil regions span residues 431–480, 571–724, and 776–805; these read KKLK…KQLE, AFRY…NNST, and LVLEEKSKKLMNECDHLKESLFQYEREKTE.

The sequence is that of Putative ankyrin repeat domain-containing protein 20A3 from Homo sapiens (Human).